Consider the following 473-residue polypeptide: NAC domain-containing protein 68 (473 aa).

The 151-residue stretch at 4 to 154 (GLIGYRFSPT…KYVVCQVKYK (151 aa)) folds into the NAC domain. A DNA-binding region spans residues 108-160 (IGIKKTLVYHEGKSPHGVRTPWVMHEYHITCLPHHKRKYVVCQVKYKGEAAEI). Residues 326–380 (DHMPRKPVTGTIDYSSDSGSDAGSISTTSYQGTSSPNISVGSSSRHLSSCSSTDS) form a disordered region. Low complexity-rich tracts occupy residues 340-354 (SSDS…STTS) and 364-379 (SVGS…SSTD). Residues 446–468 (FIYLMKMIIGNIISVLLPVKRLI) traverse the membrane as a helical segment.

Its subcellular location is the membrane. It is found in the nucleus. In terms of biological role, transcription activator activated by proteolytic cleavage through regulated intramembrane proteolysis (RIP) mediated by calpain or its functional homolog. Regulates cytokinin signaling during cell division. The polypeptide is NAC domain-containing protein 68 (NAC68) (Arabidopsis thaliana (Mouse-ear cress)).